Consider the following 299-residue polypeptide: Oxygen-dependent coproporphyrinogen-III oxidase (299 aa).

Ser92 contributes to the substrate binding site. A divalent metal cation contacts are provided by His96 and His106. The active-site Proton donor is the His106. 108 to 110 contacts substrate; sequence NVR. A divalent metal cation is bound by residues His145 and His175. The important for dimerization stretch occupies residues 240 to 275; it reads YVEFNLVWDRGTLFGLQTGGRTESILMSMPPLVRWE. 258–260 provides a ligand contact to substrate; that stretch reads GGR.

The protein belongs to the aerobic coproporphyrinogen-III oxidase family. In terms of assembly, homodimer. It depends on a divalent metal cation as a cofactor.

It localises to the cytoplasm. The catalysed reaction is coproporphyrinogen III + O2 + 2 H(+) = protoporphyrinogen IX + 2 CO2 + 2 H2O. It functions in the pathway porphyrin-containing compound metabolism; protoporphyrin-IX biosynthesis; protoporphyrinogen-IX from coproporphyrinogen-III (O2 route): step 1/1. Functionally, involved in the heme biosynthesis. Catalyzes the aerobic oxidative decarboxylation of propionate groups of rings A and B of coproporphyrinogen-III to yield the vinyl groups in protoporphyrinogen-IX. This Salmonella schwarzengrund (strain CVM19633) protein is Oxygen-dependent coproporphyrinogen-III oxidase.